Here is a 473-residue protein sequence, read N- to C-terminus: Cysteine--tRNA ligase (473 aa).

Position 30 (cysteine 30) interacts with Zn(2+). A 'HIGH' region motif is present at residues 32 to 42 (MTVYDYCHIGH). Positions 213, 238, and 242 each coordinate Zn(2+). Residues 270–274 (KMSKS) carry the 'KMSKS' region motif. Residue lysine 273 coordinates ATP.

Belongs to the class-I aminoacyl-tRNA synthetase family. As to quaternary structure, monomer. The cofactor is Zn(2+).

The protein resides in the cytoplasm. The catalysed reaction is tRNA(Cys) + L-cysteine + ATP = L-cysteinyl-tRNA(Cys) + AMP + diphosphate. The polypeptide is Cysteine--tRNA ligase (Acinetobacter baumannii (strain ACICU)).